The chain runs to 570 residues: Proline--tRNA ligase (570 aa).

It belongs to the class-II aminoacyl-tRNA synthetase family. ProS type 1 subfamily. As to quaternary structure, homodimer.

Its subcellular location is the cytoplasm. The catalysed reaction is tRNA(Pro) + L-proline + ATP = L-prolyl-tRNA(Pro) + AMP + diphosphate. Functionally, catalyzes the attachment of proline to tRNA(Pro) in a two-step reaction: proline is first activated by ATP to form Pro-AMP and then transferred to the acceptor end of tRNA(Pro). As ProRS can inadvertently accommodate and process non-cognate amino acids such as alanine and cysteine, to avoid such errors it has two additional distinct editing activities against alanine. One activity is designated as 'pretransfer' editing and involves the tRNA(Pro)-independent hydrolysis of activated Ala-AMP. The other activity is designated 'posttransfer' editing and involves deacylation of mischarged Ala-tRNA(Pro). The misacylated Cys-tRNA(Pro) is not edited by ProRS. This Desulfotalea psychrophila (strain LSv54 / DSM 12343) protein is Proline--tRNA ligase.